Here is a 75-residue protein sequence, read N- to C-terminus: Exodeoxyribonuclease 7 small subunit (75 aa).

It belongs to the XseB family. As to quaternary structure, heterooligomer composed of large and small subunits.

Its subcellular location is the cytoplasm. It carries out the reaction Exonucleolytic cleavage in either 5'- to 3'- or 3'- to 5'-direction to yield nucleoside 5'-phosphates.. Its function is as follows. Bidirectionally degrades single-stranded DNA into large acid-insoluble oligonucleotides, which are then degraded further into small acid-soluble oligonucleotides. The protein is Exodeoxyribonuclease 7 small subunit of Thermoanaerobacter sp. (strain X514).